We begin with the raw amino-acid sequence, 329 residues long: MELHILEHRLKVASIAKENIQLFTYGLIKLAFLSSKTRCKFFSLTETPEDYTIIVDEEGFLELPSSEHLSVADATWLALNVVSGGGSSSSSQPIGVTKIAKSVIAPLADQNISVFMLSTYQTDFILVRERDLPFVMHTLAAEFTILQVVNGETVAADNLGVTNGFVKPKLVQRPVIHPLSSPSNMFCVTSLDPYTLPTVTTLLMDVMFYSNGVKDSVVGSEEPGHIRFFSFSLIEGYISLVMDVQTQQRFPSNLLFTSASGELWKMVRIGGQPLGFDECGIVAQISEPLAAADIPAYYISTFKFDHALVPEENINGVINALQVSQAEKH.

ACT domains lie at 72–139 (ADAT…MHTL) and 262–322 (ELWK…NALQ).

It belongs to the GATS family. May form homodimers and heterodimers.

The protein resides in the cytoplasm. Its subcellular location is the cytosol. Its function is as follows. Functions as a negative regulator of the TORC1 signaling pathway. The polypeptide is Cytosolic arginine sensor for mTORC1 subunit 2 (Xenopus tropicalis (Western clawed frog)).